Here is a 453-residue protein sequence, read N- to C-terminus: Dibenzothiophene-sulfone monooxygenase (453 aa).

Positions 59, 106, 156, 160, and 231 each coordinate FMN.

It belongs to the NtaA/SnaA/DszA monooxygenase family. Homodimer.

The protein resides in the cytoplasm. It carries out the reaction dibenzothiophene 5,5-dioxide + FMNH2 + NADH + O2 = 2'-hydroxybiphenyl-2-sulfinate + FMN + NAD(+) + H2O + H(+). It functions in the pathway sulfur metabolism; dibenzothiophene degradation. Its function is as follows. Catalyzes the second step of the '4S' desulfurization pathway that removes covalently bound sulfur from dibenzothiophene (DBT) without breaking carbon-carbon bonds. Metabolizes DBT-sulfone (DBTO2 or DBT 5,5-dioxide) to 2-(2'-hydroxyphenyl)benzene sulphinate (HBPS). The chain is Dibenzothiophene-sulfone monooxygenase from Rhodococcus erythropolis (Arthrobacter picolinophilus).